Consider the following 86-residue polypeptide: uncharacterized protein (86 aa).

This is an uncharacterized protein from African swine fever virus (strain Badajoz 1971 Vero-adapted) (Ba71V).